The primary structure comprises 406 residues: Cysteine desulfurase (406 aa).

K226 carries the post-translational modification N6-(pyridoxal phosphate)lysine. The active-site Cysteine persulfide intermediate is the C364.

Belongs to the class-V pyridoxal-phosphate-dependent aminotransferase family. Csd subfamily. In terms of assembly, homodimer. Interacts with SufE and the SufBCD complex composed of SufB, SufC and SufD. The interaction with SufE is required to mediate the direct transfer of the sulfur atom from the S-sulfanylcysteine. It depends on pyridoxal 5'-phosphate as a cofactor.

It localises to the cytoplasm. The enzyme catalyses (sulfur carrier)-H + L-cysteine = (sulfur carrier)-SH + L-alanine. It carries out the reaction L-selenocysteine + AH2 = hydrogenselenide + L-alanine + A + H(+). The protein operates within cofactor biosynthesis; iron-sulfur cluster biosynthesis. In terms of biological role, cysteine desulfurases mobilize the sulfur from L-cysteine to yield L-alanine, an essential step in sulfur metabolism for biosynthesis of a variety of sulfur-containing biomolecules. Component of the suf operon, which is activated and required under specific conditions such as oxidative stress and iron limitation. Acts as a potent selenocysteine lyase in vitro, that mobilizes selenium from L-selenocysteine. Selenocysteine lyase activity is however unsure in vivo. The sequence is that of Cysteine desulfurase from Escherichia coli O9:H4 (strain HS).